Reading from the N-terminus, the 295-residue chain is Cytidine deaminase (295 aa).

CMP/dCMP-type deaminase domains lie at 48-168 (EDSD…FGPA) and 187-295 (DDDE…YLSL). A substrate-binding site is contributed by 89-91 (NME). Position 102 (histidine 102) interacts with Zn(2+). Catalysis depends on glutamate 104, which acts as the Proton donor. The Zn(2+) site is built by cysteine 129 and cysteine 132.

It belongs to the cytidine and deoxycytidylate deaminase family. As to quaternary structure, homodimer. The cofactor is Zn(2+).

The catalysed reaction is cytidine + H2O + H(+) = uridine + NH4(+). It carries out the reaction 2'-deoxycytidine + H2O + H(+) = 2'-deoxyuridine + NH4(+). Functionally, this enzyme scavenges exogenous and endogenous cytidine and 2'-deoxycytidine for UMP synthesis. The protein is Cytidine deaminase of Vibrio cholerae serotype O1 (strain ATCC 39541 / Classical Ogawa 395 / O395).